Consider the following 551-residue polypeptide: Hedycaryol synthase TPS20CT (551 aa).

Positions 266, 303, 307, 444, and 447 each coordinate (2E,6E)-farnesyl diphosphate. Mg(2+)-binding residues include Asp-303 and Asp-307. Residues 303–307 (DDIYD) carry the DDXXD motif motif. Positions 447, 451, and 455 each coordinate Mg(2+).

This sequence belongs to the terpene synthase family. Tpsb subfamily. It depends on Mg(2+) as a cofactor. Mn(2+) serves as cofactor. In terms of tissue distribution, highly expressed in glandular trichomes.

It catalyses the reaction (2E,6E)-farnesyl diphosphate + H2O = (2E,6E)-hedycaryol + diphosphate. It participates in secondary metabolite biosynthesis; terpenoid biosynthesis. Functionally, involved in sesquiterpene olefins biosynthesis, constituants of cannabinoids and terpenoids-rich resins. Catalyzes primarily the conversion of (2E)-farnesyl diphosphate to hedycaryol, which is spontaneously converted to elemol as a thermal degradation product. This is Hedycaryol synthase TPS20CT from Cannabis sativa (Hemp).